An 87-amino-acid chain; its full sequence is MKKRFTEQQIIGFLKEAEAGMPVKELCRKHGFSDASFYTWRAKFGGMEVSEARRLKDLEVENARLKKLLAEAMLDMEALKVVVKGKP.

Belongs to the transposase 8 family.

The sequence is that of Insertion element IS407 uncharacterized 10.0 kDa protein from Burkholderia multivorans (strain ATCC 17616 / 249).